Reading from the N-terminus, the 132-residue chain is Small ribosomal subunit protein uS8 (132 aa).

Belongs to the universal ribosomal protein uS8 family. As to quaternary structure, part of the 30S ribosomal subunit. Contacts proteins S5 and S12.

In terms of biological role, one of the primary rRNA binding proteins, it binds directly to 16S rRNA central domain where it helps coordinate assembly of the platform of the 30S subunit. The sequence is that of Small ribosomal subunit protein uS8 from Francisella tularensis subsp. tularensis (strain FSC 198).